A 420-amino-acid chain; its full sequence is Exodeoxyribonuclease 7 large subunit (420 aa).

It belongs to the XseA family. Heterooligomer composed of large and small subunits.

The protein localises to the cytoplasm. The enzyme catalyses Exonucleolytic cleavage in either 5'- to 3'- or 3'- to 5'-direction to yield nucleoside 5'-phosphates.. Its function is as follows. Bidirectionally degrades single-stranded DNA into large acid-insoluble oligonucleotides, which are then degraded further into small acid-soluble oligonucleotides. The chain is Exodeoxyribonuclease 7 large subunit from Helicobacter pylori (strain P12).